The sequence spans 128 residues: Protein FAM229A (128 aa).

A disordered region spans residues 1 to 96 (MQSSPSTLGP…VATDQNPVRP (96 aa)).

It belongs to the FAM229 family.

The protein is Protein FAM229A (Fam229a) of Mus musculus (Mouse).